The chain runs to 997 residues: MAVAVASGFWIWAAVLLVPAAAVYEDQVGKFDWRQQYVGKIKFASLEFSPGSKKLVVATEKNVIAALNSRTGEILWRHVDKGTAEGAVDAMLVHGQDAITVSNGGRLMRSWETNIGGLNWEITLDTGSFQALGLVGLQESVRYIAVLKKTTLTLHHLSSGHLKWVEHLPESDSILYQMVYSYGSGVVWALGIVPFSHVNIVKFNVEDGEIVQQVRVWTPWLQHLTGACGVVDEAVLVCPDPSSHSLHTLALETEWELRQIPLQSPDLEFGSGFQPQVLPTQPSPVAPSRAQFFLQLSPSHYALLHYHHGAVTLLKNFPQATLVSFATTGEKTVAAVMTCRTEVQKPVSAGDGSVASFPETSGAQDSLACFNQTYTINLYLVETGRRLLDTSISFSLEQKGTRPEQLYIQVFLKKDDSVGYRALVQTQDHLQLFLQQLAGKVVLWSREESLAEVVCLEMVDLPLTGAQAELEGEFGKKAAIQDGLLGMFLKRLSSQLILLQAWTSHLWKMFYDARKPRSQIKNEINIDTLARDEFNLQKMMVTVTASGKLFGIESSSGTILWKQYLPNVKPDSSFKLMVQRTTAHFPHPPQCTLLVKDKETGMSSLFVFNPIFGKWSQVAPPVLKRPILQSLLLPVMDQDYAKVLLLVDDEYKVTAFPATRNVLRQLHELAPSIFFYLVDAEQGRLSGYQLRKDLTTELSWELTIPPEVQRVVKVKGKRSSEHVHSQGRVMGDRSVLYKSLNPNLLAVVTESTDVHHERTFIGIFLIDGVTGRIIHSSVQKKARGPVHLVHSENWVVYQYWNSKARRNELTALELYEGTEQYNATAFSSLDRPQLPQVLQQSYIFPSSISAMEATITERGITSRHLLIGLPSGAILSLPKALLDPRRPEIPTEQSREENLIPYSPDVQVHAERFINYNQTVSRMRGIYTAPSGLESTCLVVAYGLDIYQTRVYPSKQFDVLKDDYDYVLISSVLFGLVFATMITKRLAQVKLLNRAWR.

An N-terminal signal peptide occupies residues 1–23 (MAVAVASGFWIWAAVLLVPAAAV). Residues 24-966 (YEDQVGKFDW…FDVLKDDYDY (943 aa)) are Lumenal-facing. Disulfide bonds link Cys228–Cys238 and Cys339–Cys369. Asn917 is a glycosylation site (N-linked (GlcNAc...) asparagine). Residues 967 to 987 (VLISSVLFGLVFATMITKRLA) traverse the membrane as a helical segment. The Cytoplasmic portion of the chain corresponds to 988 to 997 (QVKLLNRAWR).

The protein belongs to the EMC1 family. As to quaternary structure, component of the ER membrane protein complex (EMC).

The protein resides in the endoplasmic reticulum membrane. Part of the endoplasmic reticulum membrane protein complex (EMC) that enables the energy-independent insertion into endoplasmic reticulum membranes of newly synthesized membrane proteins. Preferentially accommodates proteins with transmembrane domains that are weakly hydrophobic or contain destabilizing features such as charged and aromatic residues. Involved in the cotranslational insertion of multi-pass membrane proteins in which stop-transfer membrane-anchor sequences become ER membrane spanning helices. It is also required for the post-translational insertion of tail-anchored/TA proteins in endoplasmic reticulum membranes. By mediating the proper cotranslational insertion of N-terminal transmembrane domains in an N-exo topology, with translocated N-terminus in the lumen of the ER, controls the topology of multi-pass membrane proteins like the G protein-coupled receptors. By regulating the insertion of various proteins in membranes, it is indirectly involved in many cellular processes. The sequence is that of ER membrane protein complex subunit 1 (Emc1) from Mus musculus (Mouse).